Reading from the N-terminus, the 160-residue chain is 2-C-methyl-D-erythritol 2,4-cyclodiphosphate synthase (160 aa).

2 residues coordinate a divalent metal cation: Asp-10 and His-12. 4-CDP-2-C-methyl-D-erythritol 2-phosphate is bound by residues 10–12 (DVH) and 36–37 (HS). Residue His-44 participates in a divalent metal cation binding. 4-CDP-2-C-methyl-D-erythritol 2-phosphate-binding positions include 58-60 (DIG), 134-137 (TTTE), Phe-141, and Arg-144.

The protein belongs to the IspF family. As to quaternary structure, homotrimer. It depends on a divalent metal cation as a cofactor.

It catalyses the reaction 4-CDP-2-C-methyl-D-erythritol 2-phosphate = 2-C-methyl-D-erythritol 2,4-cyclic diphosphate + CMP. Its pathway is isoprenoid biosynthesis; isopentenyl diphosphate biosynthesis via DXP pathway; isopentenyl diphosphate from 1-deoxy-D-xylulose 5-phosphate: step 4/6. Involved in the biosynthesis of isopentenyl diphosphate (IPP) and dimethylallyl diphosphate (DMAPP), two major building blocks of isoprenoid compounds. Catalyzes the conversion of 4-diphosphocytidyl-2-C-methyl-D-erythritol 2-phosphate (CDP-ME2P) to 2-C-methyl-D-erythritol 2,4-cyclodiphosphate (ME-CPP) with a corresponding release of cytidine 5-monophosphate (CMP). The chain is 2-C-methyl-D-erythritol 2,4-cyclodiphosphate synthase from Phocaeicola vulgatus (strain ATCC 8482 / DSM 1447 / JCM 5826 / CCUG 4940 / NBRC 14291 / NCTC 11154) (Bacteroides vulgatus).